Reading from the N-terminus, the 274-residue chain is Ribulose-phosphate 3-epimerase, chloroplastic (274 aa).

The transit peptide at 1–39 directs the protein to the chloroplast; the sequence is MASPSSSSSLCSTFASPRAASLGRRLAFSSPRKAFRVRA. Ser-56 provides a ligand contact to substrate. A divalent metal cation is bound by residues His-81, Asp-83, and His-114. Asp-83 serves as the catalytic Proton acceptor. Substrate contacts are provided by residues His-114, 192 to 195, 225 to 227, and 247 to 248; these read GFGG, DGG, and GS. Residue Asp-225 participates in a divalent metal cation binding. The active-site Proton donor is the Asp-225.

Belongs to the ribulose-phosphate 3-epimerase family. As to quaternary structure, homooctamer. Co(2+) serves as cofactor. It depends on Fe(2+) as a cofactor. The cofactor is Mn(2+). Requires Zn(2+) as cofactor.

The protein resides in the plastid. It localises to the chloroplast thylakoid membrane. It catalyses the reaction D-ribulose 5-phosphate = D-xylulose 5-phosphate. It functions in the pathway carbohydrate biosynthesis; Calvin cycle. Its function is as follows. Catalyzes the reversible epimerization of D-ribulose 5-phosphate to D-xylulose 5-phosphate. This is Ribulose-phosphate 3-epimerase, chloroplastic (RPE) from Oryza sativa subsp. japonica (Rice).